The chain runs to 500 residues: Ribose import ATP-binding protein RbsA (500 aa).

2 ABC transporter domains span residues 3–239 (IEMK…VGRE) and 246–493 (DRTP…TGGV). 35–42 (GENGAGKS) is a binding site for ATP.

The protein belongs to the ABC transporter superfamily. Ribose importer (TC 3.A.1.2.1) family. The complex is composed of an ATP-binding protein (RbsA), two transmembrane proteins (RbsC) and a solute-binding protein (RbsB).

It is found in the cell membrane. It catalyses the reaction D-ribose(out) + ATP + H2O = D-ribose(in) + ADP + phosphate + H(+). Part of the ABC transporter complex RbsABC involved in ribose import. Responsible for energy coupling to the transport system. The polypeptide is Ribose import ATP-binding protein RbsA (Lacticaseibacillus paracasei (strain ATCC 334 / BCRC 17002 / CCUG 31169 / CIP 107868 / KCTC 3260 / NRRL B-441) (Lactobacillus paracasei)).